The primary structure comprises 663 residues: uncharacterized protein (663 aa).

An N-terminal signal peptide occupies residues 1–29; the sequence is MLDIGVIGRLKFATAFMAMSLLLVPAAEA.

Belongs to the bacterial solute-binding protein 5 family.

Its subcellular location is the periplasm. In terms of biological role, possible binding-protein with either a transport or enzymatic activity. This is an uncharacterized protein from Sinorhizobium fredii (strain NBRC 101917 / NGR234).